The primary structure comprises 156 residues: 2-C-methyl-D-erythritol 2,4-cyclodiphosphate synthase (156 aa).

The a divalent metal cation site is built by Asp-10 and His-12. Residues 10–12 and 36–37 each bind 4-CDP-2-C-methyl-D-erythritol 2-phosphate; these read DSH and HS. His-44 provides a ligand contact to a divalent metal cation. 4-CDP-2-C-methyl-D-erythritol 2-phosphate is bound by residues 58 to 60 and 63 to 67; these read DIG and FKDTD.

This sequence belongs to the IspF family. Homotrimer. A divalent metal cation serves as cofactor.

The catalysed reaction is 4-CDP-2-C-methyl-D-erythritol 2-phosphate = 2-C-methyl-D-erythritol 2,4-cyclic diphosphate + CMP. The protein operates within isoprenoid biosynthesis; isopentenyl diphosphate biosynthesis via DXP pathway; isopentenyl diphosphate from 1-deoxy-D-xylulose 5-phosphate: step 4/6. In terms of biological role, involved in the biosynthesis of isopentenyl diphosphate (IPP) and dimethylallyl diphosphate (DMAPP), two major building blocks of isoprenoid compounds. Catalyzes the conversion of 4-diphosphocytidyl-2-C-methyl-D-erythritol 2-phosphate (CDP-ME2P) to 2-C-methyl-D-erythritol 2,4-cyclodiphosphate (ME-CPP) with a corresponding release of cytidine 5-monophosphate (CMP). This chain is 2-C-methyl-D-erythritol 2,4-cyclodiphosphate synthase, found in Aquifex aeolicus (strain VF5).